The chain runs to 320 residues: NAC domain-containing protein 20 (320 aa).

An NAC domain is found at 14–170; that stretch reads LPPGFRFHPT…DWAVCRIFHK (157 aa). Residues 114–176 mediate DNA binding; sequence IGMKKTLVFY…IFHKSSGIKK (63 aa).

As to quaternary structure, forms homodimers. Forms heterodimers with NAC26. In terms of tissue distribution, expressed in developing seeds. Expressed in developing endosperm.

The protein resides in the nucleus. The protein localises to the endoplasmic reticulum. Transcription factor that acts redundantly with NAC26 to regulate the expression of genes involved in the biosynthesis of starch and storage proteins in grain. Directly binds to the promoters of starch synthase 1 (SS1), pullulanase (PUL), glutelin A1 (GLUA1), glutelins B4 and B5 (GLUB4 and GLUB5), alpha-globulin and 16 kDa prolamin, and activates their expression. This Oryza sativa subsp. japonica (Rice) protein is NAC domain-containing protein 20.